The sequence spans 714 residues: Fatty acid oxidation complex subunit alpha (714 aa).

The segment at 1 to 190 is enoyl-CoA hydratase; sequence MEMASAFTLN…KLGLVDDVVP (190 aa). The segment at 306–714 is 3-hydroxyacyl-CoA dehydrogenase; it reads APLNSVGILG…FWKTTATDLQ (409 aa).

It in the N-terminal section; belongs to the enoyl-CoA hydratase/isomerase family. The protein in the central section; belongs to the 3-hydroxyacyl-CoA dehydrogenase family. Heterotetramer of two alpha chains (FadJ) and two beta chains (FadI).

Its subcellular location is the cytoplasm. It catalyses the reaction a (3S)-3-hydroxyacyl-CoA = a (2E)-enoyl-CoA + H2O. The catalysed reaction is a 4-saturated-(3S)-3-hydroxyacyl-CoA = a (3E)-enoyl-CoA + H2O. The enzyme catalyses a (3S)-3-hydroxyacyl-CoA + NAD(+) = a 3-oxoacyl-CoA + NADH + H(+). It carries out the reaction (3S)-3-hydroxybutanoyl-CoA = (3R)-3-hydroxybutanoyl-CoA. The protein operates within lipid metabolism; fatty acid beta-oxidation. Catalyzes the formation of a hydroxyacyl-CoA by addition of water on enoyl-CoA. Also exhibits 3-hydroxyacyl-CoA epimerase and 3-hydroxyacyl-CoA dehydrogenase activities. This Shigella flexneri protein is Fatty acid oxidation complex subunit alpha.